The sequence spans 315 residues: 4-hydroxy-3-methylbut-2-enyl diphosphate reductase (315 aa).

Cysteine 12 lines the [4Fe-4S] cluster pocket. Residues histidine 43 and histidine 81 each contribute to the (2E)-4-hydroxy-3-methylbut-2-enyl diphosphate site. 2 residues coordinate dimethylallyl diphosphate: histidine 43 and histidine 81. The isopentenyl diphosphate site is built by histidine 43 and histidine 81. Cysteine 103 is a [4Fe-4S] cluster binding site. (2E)-4-hydroxy-3-methylbut-2-enyl diphosphate is bound at residue histidine 131. Histidine 131 contacts dimethylallyl diphosphate. An isopentenyl diphosphate-binding site is contributed by histidine 131. The Proton donor role is filled by glutamate 133. Threonine 172 lines the (2E)-4-hydroxy-3-methylbut-2-enyl diphosphate pocket. A [4Fe-4S] cluster-binding site is contributed by cysteine 200. 3 residues coordinate (2E)-4-hydroxy-3-methylbut-2-enyl diphosphate: serine 228, asparagine 230, and serine 273. The dimethylallyl diphosphate site is built by serine 228, asparagine 230, and serine 273. Residues serine 228, asparagine 230, and serine 273 each coordinate isopentenyl diphosphate.

Belongs to the IspH family. [4Fe-4S] cluster serves as cofactor.

It catalyses the reaction isopentenyl diphosphate + 2 oxidized [2Fe-2S]-[ferredoxin] + H2O = (2E)-4-hydroxy-3-methylbut-2-enyl diphosphate + 2 reduced [2Fe-2S]-[ferredoxin] + 2 H(+). It carries out the reaction dimethylallyl diphosphate + 2 oxidized [2Fe-2S]-[ferredoxin] + H2O = (2E)-4-hydroxy-3-methylbut-2-enyl diphosphate + 2 reduced [2Fe-2S]-[ferredoxin] + 2 H(+). It functions in the pathway isoprenoid biosynthesis; dimethylallyl diphosphate biosynthesis; dimethylallyl diphosphate from (2E)-4-hydroxy-3-methylbutenyl diphosphate: step 1/1. Its pathway is isoprenoid biosynthesis; isopentenyl diphosphate biosynthesis via DXP pathway; isopentenyl diphosphate from 1-deoxy-D-xylulose 5-phosphate: step 6/6. Its function is as follows. Catalyzes the conversion of 1-hydroxy-2-methyl-2-(E)-butenyl 4-diphosphate (HMBPP) into a mixture of isopentenyl diphosphate (IPP) and dimethylallyl diphosphate (DMAPP). Acts in the terminal step of the DOXP/MEP pathway for isoprenoid precursor biosynthesis. In Exiguobacterium sibiricum (strain DSM 17290 / CCUG 55495 / CIP 109462 / JCM 13490 / 255-15), this protein is 4-hydroxy-3-methylbut-2-enyl diphosphate reductase.